A 290-amino-acid polypeptide reads, in one-letter code: Hydroxyacylglutathione hydrolase-like protein (290 aa).

Zn(2+) contacts are provided by H54, H56, D58, H59, H110, D134, and H172.

Belongs to the metallo-beta-lactamase superfamily. Glyoxalase II family. Zn(2+) is required as a cofactor.

Its function is as follows. Hydrolase acting on ester bonds. The protein is Hydroxyacylglutathione hydrolase-like protein (HAGHL) of Homo sapiens (Human).